A 295-amino-acid chain; its full sequence is Pyridoxal 5'-phosphate synthase subunit PdxS (295 aa).

D25 contacts D-ribose 5-phosphate. K82 functions as the Schiff-base intermediate with D-ribose 5-phosphate in the catalytic mechanism. G154 provides a ligand contact to D-ribose 5-phosphate. R166 provides a ligand contact to D-glyceraldehyde 3-phosphate. Residues G215 and 236–237 each bind D-ribose 5-phosphate; that span reads GS.

The protein belongs to the PdxS/SNZ family. In terms of assembly, in the presence of PdxT, forms a dodecamer of heterodimers.

The catalysed reaction is aldehydo-D-ribose 5-phosphate + D-glyceraldehyde 3-phosphate + L-glutamine = pyridoxal 5'-phosphate + L-glutamate + phosphate + 3 H2O + H(+). Its pathway is cofactor biosynthesis; pyridoxal 5'-phosphate biosynthesis. Catalyzes the formation of pyridoxal 5'-phosphate from ribose 5-phosphate (RBP), glyceraldehyde 3-phosphate (G3P) and ammonia. The ammonia is provided by the PdxT subunit. Can also use ribulose 5-phosphate and dihydroxyacetone phosphate as substrates, resulting from enzyme-catalyzed isomerization of RBP and G3P, respectively. This chain is Pyridoxal 5'-phosphate synthase subunit PdxS, found in Staphylococcus carnosus (strain TM300).